The primary structure comprises 92 residues: MKLCVTVLSLLVLAAAFCSPALSAPMGSDPPTSCCFSYTARKLPRNFVVDYYETSSLCSQPAVVFQTKRGKQVCADPSETWVQEYVNDLELN.

The N-terminal stretch at 1-23 is a signal peptide; sequence MKLCVTVLSLLVLAAAFCSPALS. Disulfide bonds link C34–C58 and C35–C74.

Belongs to the intercrine beta (chemokine CC) family. In terms of assembly, homodimer. Interacts with CCR5. As to expression, detected in peripheral blood mononuclear cells and lymph nodes.

It is found in the secreted. Its function is as follows. Monokine with inflammatory and chemokinetic properties. This chain is C-C motif chemokine 4 (CCL4), found in Macaca mulatta (Rhesus macaque).